Consider the following 198-residue polypeptide: N-acetyltransferase 9-like protein (198 aa).

The N-acetyltransferase domain maps to 14–186 (IILVPYKEKH…SNNFTNLTAD (173 aa)).

The protein belongs to the acetyltransferase family. GNAT subfamily.

The sequence is that of N-acetyltransferase 9-like protein (nat9) from Nematostella vectensis (Starlet sea anemone).